The following is a 127-amino-acid chain: Large ribosomal subunit protein uL18 (127 aa).

Belongs to the universal ribosomal protein uL18 family. In terms of assembly, part of the 50S ribosomal subunit; part of the 5S rRNA/L5/L18/L25 subcomplex. Contacts the 5S and 23S rRNAs.

Its function is as follows. This is one of the proteins that bind and probably mediate the attachment of the 5S RNA into the large ribosomal subunit, where it forms part of the central protuberance. The polypeptide is Large ribosomal subunit protein uL18 (Streptomyces avermitilis (strain ATCC 31267 / DSM 46492 / JCM 5070 / NBRC 14893 / NCIMB 12804 / NRRL 8165 / MA-4680)).